The chain runs to 185 residues: Elongation factor P (185 aa).

This sequence belongs to the elongation factor P family.

It is found in the cytoplasm. It participates in protein biosynthesis; polypeptide chain elongation. In terms of biological role, involved in peptide bond synthesis. Stimulates efficient translation and peptide-bond synthesis on native or reconstituted 70S ribosomes in vitro. Probably functions indirectly by altering the affinity of the ribosome for aminoacyl-tRNA, thus increasing their reactivity as acceptors for peptidyl transferase. The sequence is that of Elongation factor P from Microcystis aeruginosa (strain NIES-843 / IAM M-2473).